Consider the following 85-residue polypeptide: UPF0335 protein Plav_2034 (85 aa).

The protein belongs to the UPF0335 family.

This is UPF0335 protein Plav_2034 from Parvibaculum lavamentivorans (strain DS-1 / DSM 13023 / NCIMB 13966).